Here is a 766-residue protein sequence, read N- to C-terminus: MGNDERKRPTKKMKYGGKDDQKMKNIQNVEDYYDDADEDSRDGEGEEKRRDFTDLELKPDHGNRPLWACADGKIFLETFSPLYKQAYDFLIAIAEPVCRPESMHEYNLTPHSLYAAVSVGLETETIISVLNKLSKTKLPGEIIDFIHASTANYGKVKLVLKKNRYFIESPFPEVLKRLLSDDVINRARFTSEPYYGGDGFTIGKTSGELEAGPGELLNEAELAAAAEEKETHSFEIDPALVENVKQRCLPNALNYPMLEEYDFRNDNVNPDLDMELKPHAQPRPYQEKSLSKMFGNGRARSGIIVLPCGAGKSLVGVSAAARIKKSCLCLATNAVSVDQWAYQFKLWSTIKDDQICRFTSDSKERFRGNAGVVVTTYNMIAFGGKRSEEAEKIIEEMRNREWGLLLMDEVHVVPAHMFRKVISITKSHCKLGLTATLVREDEKITDLNFLIGPKLYEANWLDLVKGGFIANVQCAEVWCPMTKEFFAEYLKKENSKKKQALYVMNPNKFRACEFLIRFHEQQRGDKIIVFADNLFALTEYAMKLRKPMIYGATSHIERTKILEAFKTSKTVNTVFLSKVGDNSIDIPEANVIIQISSHAGSRRQEAQRLGRILRAKGKLEDRMAGGKEEYNAFFYSLVSTDTQEMYYSTKRQQFLIDQGYSFKVITSLPPPDAGSSLGYHSQEEQLSLLGKVLNAGDDMVGLEQLEEDTDGKALKTRRSMGSMSAMSGANGRVYMEYNSGRQKSGNQSKKPKDPTKRHNIFKKRYV.

The interval M1–E56 is disordered. Positions D31–R41 are enriched in acidic residues. Residues D42–E56 are compositionally biased toward basic and acidic residues. Residues M293–L455 form the Helicase ATP-binding domain. An ATP-binding site is contributed by L306–S313. Positions D408–H411 match the DEVH box motif. The Helicase C-terminal domain occupies R510–S676. Residues S739–S748 show a composition bias toward polar residues. Residues S739–V766 form a disordered region. Positions K749–Y765 match the Nuclear localization signal motif. The segment covering R757–V766 has biased composition (basic residues).

Belongs to the helicase family. RAD25/XPB subfamily. As to quaternary structure, component of the 7-subunit TFIIH core complex composed of XPB, XPD, TFB1/GTF2H1, GTF2H2/P44, TFB4/GTF2H3, TFB2/GTF2H4 and TFB5/GTF2H5, which is active in NER. The core complex associates with the 3-subunit CDK-activating kinase (CAK) module composed of CYCH1/cyclin H1, CDKD and MAT1/At4g30820 to form the 10-subunit holoenzyme (holo-TFIIH) active in transcription. Expressed ubiquitously.

It localises to the nucleus. It catalyses the reaction Couples ATP hydrolysis with the unwinding of duplex DNA by translocating in the 3'-5' direction.. The enzyme catalyses ATP + H2O = ADP + phosphate + H(+). Functionally, ATP-dependent 3'-5' DNA helicase/translocase; binds dsDNA rather than ssDNA, unzipping it in a translocase rather than classical helicase activity. Component of the general transcription and DNA repair factor IIH (TFIIH) core complex. When complexed to CDK-activating kinase (CAK), involved in RNA transcription by RNA polymerase II. The ATPase activity of XPB/ERCC3, but not its helicase activity, is required for DNA opening; it may wrap around the damaged DNA wedging it open, causing localized melting and twisting that allows XPD/ERCC2 helicase to anchor. The ATP-dependent helicase activity of XPB/ERCC3 may be required for promoter escape. Also involved in transcription-coupled nucleotide excision repair (NER) of damaged DNA. In NER, TFIIH acts by opening DNA around the lesion to allow the excision of the damaged oligonucleotide and its replacement by a new DNA fragment. The structure of the TFIIH transcription complex differs from the NER-TFIIH complex. Partially complements UV sensitivity of a yeast SSL2 mutation. This chain is General transcription and DNA repair factor IIH helicase/translocase subunit XPB2 (XPB2), found in Arabidopsis thaliana (Mouse-ear cress).